A 142-amino-acid polypeptide reads, in one-letter code: Large ribosomal subunit protein uL13 (142 aa).

Belongs to the universal ribosomal protein uL13 family. In terms of assembly, part of the 50S ribosomal subunit.

Functionally, this protein is one of the early assembly proteins of the 50S ribosomal subunit, although it is not seen to bind rRNA by itself. It is important during the early stages of 50S assembly. This is Large ribosomal subunit protein uL13 from Vibrio atlanticus (strain LGP32) (Vibrio splendidus (strain Mel32)).